The primary structure comprises 5207 residues: E3 ubiquitin-protein ligase RNF213 (5207 aa).

Disordered stretches follow at residues 1–20 and 27–365; these read MECP…FCSQ and PAAP…EADV. Over residues 34 to 43 the composition is skewed to polar residues; that stretch reads SENNNSTMAS. Basic residues predominate over residues 89 to 100; it reads KKKKRKKKKKGN. Composition is skewed to low complexity over residues 101 to 117 and 136 to 157; these read KSAS…PASP and SQAQ…ATTP. A compositionally biased stretch (polar residues) spans 188–197; it reads SEAQSSPQFQ. Serine 208 and serine 217 each carry phosphoserine. Polar residues predominate over residues 248 to 266; the sequence is GGSSEPGTELQTTEQQAGA. Basic and acidic residues-rich tracts occupy residues 285–294, 309–346, and 353–362; these read AGKEMKEKTQ, HCQE…EGKN, and KNEKEQKNQE. A coiled-coil region spans residues 343 to 374; that stretch reads EGKNRSAAAVKNEKEQKNQEADVQEVKASTLS. A Glycyl lysine isopeptide (Lys-Gly) (interchain with G-Cter in SUMO2) cross-link involves residue lysine 1151. Serine 1258 is modified (phosphoserine). ATP-binding positions include 1995–2000, glutamate 2098, aspartate 2155, and arginine 2216; that span reads GVGKSL. The residue at position 2273 (serine 2273) is a Phosphoserine. ATP is bound by residues lysine 2499 and serine 2574. The Zn(2+) site is built by cysteine 3997, cysteine 4000, cysteine 4012, histidine 4014, cysteine 4017, cysteine 4020, cysteine 4032, cysteine 4035, cysteine 4505, and histidine 4509. The RING-type zinc finger occupies 3997-4036; the sequence is CSICLGDAKDPVCLPCDHVHCLRCLRAWFASEQMICPYCL. An RZ-type zinc finger spans residues 4483-4555; the sequence is MPEDLLAQAR…VKDKADRTQT (73 aa). Cysteine 4516 serves as the catalytic Nucleophile; for E3 ubiquitin-lipopolysaccharide ligase activity. Residues cysteine 4525 and cysteine 4528 each contribute to the Zn(2+) site.

Belongs to the AAA ATPase family. As to quaternary structure, monomer. Interacts with UBE2L3/UBCH7; UBE2L3/UBCH7 is the most efficient ubiquitin-conjugating enzyme E2 for the ubiquitin ligase activity. Interacts with UBE2N/UBC13; promoting 'Lys-63'-linked ubiquitination of target proteins. (Microbial infection) Interacts with M.tuberculosis protein Rv3655c, which impairs caspase-8 activation and suppresses macrophage apoptosis by blocking the extrinsic pathway. In terms of processing, autoubiquitinated. Widely expressed (at protein level). In terms of tissue distribution, major isoform detected in all tissues examined. As to expression, minor isoform with restricted expression.

It is found in the cytoplasm. The protein resides in the cytosol. It localises to the lipid droplet. It carries out the reaction S-ubiquitinyl-[E2 ubiquitin-conjugating enzyme]-L-cysteine + [acceptor protein]-L-lysine = [E2 ubiquitin-conjugating enzyme]-L-cysteine + N(6)-ubiquitinyl-[acceptor protein]-L-lysine.. It catalyses the reaction ATP + H2O = ADP + phosphate + H(+). It functions in the pathway protein modification; protein ubiquitination. Functionally, atypical E3 ubiquitin ligase that can catalyze ubiquitination of both proteins and lipids, and which is involved in various processes, such as lipid metabolism, angiogenesis and cell-autonomous immunity. Acts as a key immune sensor by catalyzing ubiquitination of the lipid A moiety of bacterial lipopolysaccharide (LPS) via its RZ-type zinc-finger: restricts the proliferation of cytosolic bacteria, such as Salmonella, by generating the bacterial ubiquitin coat through the ubiquitination of LPS. Also acts indirectly by mediating the recruitment of the LUBAC complex, which conjugates linear polyubiquitin chains. Ubiquitination of LPS triggers cell-autonomous immunity, such as antibacterial autophagy, leading to degradation of the microbial invader. Involved in lipid metabolism by regulating fat storage and lipid droplet formation; act by inhibiting the lipolytic process. Also regulates lipotoxicity by inhibiting desaturation of fatty acids. Also acts as an E3 ubiquitin-protein ligase via its RING-type zinc finger: mediates 'Lys-63'-linked ubiquitination of target proteins. Involved in the non-canonical Wnt signaling pathway in vascular development: acts by mediating ubiquitination and degradation of FLNA and NFATC2 downstream of RSPO3, leading to inhibit the non-canonical Wnt signaling pathway and promoting vessel regression. Also has ATPase activity; ATPase activity is required for ubiquitination of LPS. The protein is E3 ubiquitin-protein ligase RNF213 of Homo sapiens (Human).